The primary structure comprises 576 residues: Arginine--tRNA ligase (576 aa).

The short motif at 122 to 132 (PNVAKEMHVGH) is the 'HIGH' region element.

This sequence belongs to the class-I aminoacyl-tRNA synthetase family. In terms of assembly, monomer.

It localises to the cytoplasm. It catalyses the reaction tRNA(Arg) + L-arginine + ATP = L-arginyl-tRNA(Arg) + AMP + diphosphate. This is Arginine--tRNA ligase from Serratia proteamaculans (strain 568).